A 101-amino-acid polypeptide reads, in one-letter code: Phosphoribosyl-AMP cyclohydrolase (101 aa).

Residue Asp-71 participates in Mg(2+) binding. Cys-72 is a Zn(2+) binding site. Residues Asp-73 and Asp-75 each contribute to the Mg(2+) site. Zn(2+) is bound by residues Cys-88 and Cys-95.

It belongs to the PRA-CH family. In terms of assembly, homodimer. Requires Mg(2+) as cofactor. The cofactor is Zn(2+).

It localises to the cytoplasm. It catalyses the reaction 1-(5-phospho-beta-D-ribosyl)-5'-AMP + H2O = 1-(5-phospho-beta-D-ribosyl)-5-[(5-phospho-beta-D-ribosylamino)methylideneamino]imidazole-4-carboxamide. Its pathway is amino-acid biosynthesis; L-histidine biosynthesis; L-histidine from 5-phospho-alpha-D-ribose 1-diphosphate: step 3/9. Functionally, catalyzes the hydrolysis of the adenine ring of phosphoribosyl-AMP. This chain is Phosphoribosyl-AMP cyclohydrolase, found in Bacillus cereus (strain ATCC 14579 / DSM 31 / CCUG 7414 / JCM 2152 / NBRC 15305 / NCIMB 9373 / NCTC 2599 / NRRL B-3711).